The sequence spans 371 residues: NDMA-dependent alcohol dehydrogenase (371 aa).

Zn(2+) is bound by residues Cys-40, His-61, Cys-91, Cys-94, Cys-97, Cys-105, and Cys-167.

Belongs to the zinc-containing alcohol dehydrogenase family. In terms of assembly, homotrimer. NADH serves as cofactor.

It carries out the reaction N,N-dimethyl-4-nitrosoaniline + a primary alcohol = 4-(hydroxylamino)-N,N-dimethylaniline + an aldehyde. The enzyme catalyses ethanol + A = acetaldehyde + AH2. With respect to regulation, inhibited by trans-4-(N,N-dimethylamino)-cinnamaldehyde through direct binding to the catalytic zinc ion in a substrate-like geometry. Isobutyramide acts as a competitive inhibitor with respect to the electron acceptor NDMA. Acetaldehyde, AMP, ADP, ATP, as well as CuSO(4), FeSO(4), HgCl(2), NiCl(2), ZnSO(4), KCN, and NaN(3) are additional inhibitors of the catalytic activity. Functionally, catalytically different from common alcohol dehydrogenases. Effective in oxidizing ethanol, other primary alcohols and benzylalcohol only in the presence of p-nitroso-N,N-dimethylaniline (NDMA) as an electron acceptor. NADH acts as a cofactor here instead as a coenzyme. This Amycolatopsis methanolica protein is NDMA-dependent alcohol dehydrogenase.